The following is a 313-amino-acid chain: Intelectin-1a (313 aa).

Residues 1–18 form the signal peptide; sequence MTQLGFLLFIMVATRGCS. The Fibrinogen C-terminal domain occupies 32–251; sequence SFFSSLPRSC…NNERAASALC (220 aa). C41 and C70 are joined by a disulfide. H86, E87, N89, G92, G97, D98, and D133 together coordinate Ca(2+). Intrachain disulfides connect C94–C280, C199–C259, and C251–C265. Ca(2+)-binding residues include N260, E262, E274, and D282. Residues 262-263 and E274 contribute to the a carbohydrate site; that span reads EH. A lipid anchor (GPI-anchor amidated serine) is attached at S298. The propeptide occupies 299–313; the sequence is SSRKITEAAVLLFYR.

Monomer. May interact with LTF. Expressed in small intestinal Paneth cells in uninfected mice. Expression also detected in various other tissues including stomach, kidney, ovary and brain.

It is found in the cell membrane. The protein localises to the secreted. Its function is as follows. Lectin that specifically recognizes microbial carbohydrate chains in a calcium-dependent manner. Binds to microbial glycans that contain a terminal acyclic 1,2-diol moiety, including beta-linked D-galactofuranose (beta-Galf), D-phosphoglycerol-modified glycans, D-glycero-D-talo-oct-2-ulosonic acid (KO) and 3-deoxy-D-manno-oct-2-ulosonic acid (KDO). Binds to glycans from Gram-positive and Gram-negative bacteria, including K.pneumoniae, S.pneumoniae, Y.pestis, P.mirabilis and P.vulgaris. Does not bind mammalian glycans. Probably plays a role in the defense system against microorganisms. May function as adipokine that has no effect on basal glucose uptake but enhances insulin-stimulated glucose uptake in adipocytes. Increases AKT phosphorylation in the absence and presence of insulin. May interact with lactoferrin/LTF and increase its uptake, and may thereby play a role in iron absorption. The polypeptide is Intelectin-1a (Itln1) (Mus musculus (Mouse)).